A 442-amino-acid chain; its full sequence is Glutamyl-tRNA(Gln) amidotransferase subunit D (442 aa).

Positions 63–84 (TQTDIGSSAGAGADTEADKTES) are disordered. In terms of domain architecture, Asparaginase/glutaminase spans 102–429 (PTVSLISTGG…PDPTNAMRKS (328 aa)). Residues Thr112, Thr188, Asp189, and Lys265 contribute to the active site.

It belongs to the asparaginase 1 family. GatD subfamily. Heterodimer of GatD and GatE.

It catalyses the reaction L-glutamyl-tRNA(Gln) + L-glutamine + ATP + H2O = L-glutaminyl-tRNA(Gln) + L-glutamate + ADP + phosphate + H(+). Allows the formation of correctly charged Gln-tRNA(Gln) through the transamidation of misacylated Glu-tRNA(Gln) in organisms which lack glutaminyl-tRNA synthetase. The reaction takes place in the presence of glutamine and ATP through an activated gamma-phospho-Glu-tRNA(Gln). The GatDE system is specific for glutamate and does not act on aspartate. In Haloquadratum walsbyi (strain DSM 16790 / HBSQ001), this protein is Glutamyl-tRNA(Gln) amidotransferase subunit D.